We begin with the raw amino-acid sequence, 615 residues long: Elongation factor 4 (615 aa).

In terms of domain architecture, tr-type G spans 14–200; it reads SKIRNFCIIA…KVAELIPAPT (187 aa). Residues 26-31 and 147-150 each bind GTP; these read DHGKST and NKID.

It belongs to the TRAFAC class translation factor GTPase superfamily. Classic translation factor GTPase family. LepA subfamily.

It localises to the cell membrane. It catalyses the reaction GTP + H2O = GDP + phosphate + H(+). Required for accurate and efficient protein synthesis under certain stress conditions. May act as a fidelity factor of the translation reaction, by catalyzing a one-codon backward translocation of tRNAs on improperly translocated ribosomes. Back-translocation proceeds from a post-translocation (POST) complex to a pre-translocation (PRE) complex, thus giving elongation factor G a second chance to translocate the tRNAs correctly. Binds to ribosomes in a GTP-dependent manner. The chain is Elongation factor 4 from Corynebacterium aurimucosum (strain ATCC 700975 / DSM 44827 / CIP 107346 / CN-1) (Corynebacterium nigricans).